The primary structure comprises 200 residues: Dephospho-CoA kinase (200 aa).

Positions 4-200 (VIGLTGGIAS…VILKKWNIID (197 aa)) constitute a DPCK domain. 12–17 (ASGKST) is an ATP binding site.

The protein belongs to the CoaE family.

The protein resides in the cytoplasm. It carries out the reaction 3'-dephospho-CoA + ATP = ADP + CoA + H(+). The protein operates within cofactor biosynthesis; coenzyme A biosynthesis; CoA from (R)-pantothenate: step 5/5. Functionally, catalyzes the phosphorylation of the 3'-hydroxyl group of dephosphocoenzyme A to form coenzyme A. The sequence is that of Dephospho-CoA kinase from Bacillus cereus (strain ATCC 14579 / DSM 31 / CCUG 7414 / JCM 2152 / NBRC 15305 / NCIMB 9373 / NCTC 2599 / NRRL B-3711).